Reading from the N-terminus, the 190-residue chain is MKKVSPSYLKHHFLIAMPHMHDENFAQTLTYIVEHNANGAMGLVINRPQSLTLADVLEQLRPELPAPRHCQDIVIHTGGPVQTDRGFVLHPSGQTFQATVNLPGGISLSTSQDVLFSIADGYGPDQNVITLGYAGWDAGQLDAEMADNAWLTCSFDPAILFDVDSDQRLEAAARRLGINLNLISTQAGHA.

It belongs to the UPF0301 (AlgH) family.

In Pseudomonas syringae pv. syringae (strain B728a), this protein is UPF0301 protein Psyr_0485.